The sequence spans 98 residues: NADH-ubiquinone oxidoreductase chain 4L (98 aa).

Transmembrane regions (helical) follow at residues 1 to 21, 29 to 49, and 61 to 81; these read MSLV…GLLM, SLLC…LMIL, and IILL…LVMV.

Belongs to the complex I subunit 4L family. As to quaternary structure, core subunit of respiratory chain NADH dehydrogenase (Complex I) which is composed of 45 different subunits.

It localises to the mitochondrion inner membrane. It carries out the reaction a ubiquinone + NADH + 5 H(+)(in) = a ubiquinol + NAD(+) + 4 H(+)(out). Its function is as follows. Core subunit of the mitochondrial membrane respiratory chain NADH dehydrogenase (Complex I) which catalyzes electron transfer from NADH through the respiratory chain, using ubiquinone as an electron acceptor. Part of the enzyme membrane arm which is embedded in the lipid bilayer and involved in proton translocation. The chain is NADH-ubiquinone oxidoreductase chain 4L (MT-ND4L) from Pantholops hodgsonii (Chiru).